We begin with the raw amino-acid sequence, 255 residues long: Phosphate import ATP-binding protein PstB (255 aa).

Residues 8–250 enclose the ABC transporter domain; that stretch reads IKSSNLNVHY…PGNKMTQDYI (243 aa). Residue 40–47 participates in ATP binding; the sequence is GPSGCGKS.

This sequence belongs to the ABC transporter superfamily. Phosphate importer (TC 3.A.1.7) family. In terms of assembly, the complex is composed of two ATP-binding proteins (PstB), two transmembrane proteins (PstC and PstA) and a solute-binding protein (PstS).

It is found in the cell inner membrane. It catalyses the reaction phosphate(out) + ATP + H2O = ADP + 2 phosphate(in) + H(+). In terms of biological role, part of the ABC transporter complex PstSACB involved in phosphate import. Responsible for energy coupling to the transport system. This chain is Phosphate import ATP-binding protein PstB, found in Pelagibacter ubique (strain HTCC1062).